The primary structure comprises 704 residues: MAQDVLTDLNKVRNIGIMAHIDAGKTTTTERILFYTGVNHKIGETHDGASTTDWMEQEKERGITITSAAVTSFWNGNQINIIDTPGHVDFTVEVERSLRVLDGAVAVFDGKEGVEPQSETVWRQADKYEVPRICFVNKMDKLGADFYFTVDTIINRLGAKPLVIQLPIGAENDFVGVVDLLEMRALVWPGDSKGDVTMGAKYEVQEIPADLLEKAQEYRAALVEAAAEASEELMEKYLEGEELTVAELKAGIRKLTIASEIYPVLCGSAFKNRGVQPMLDAVVDFLPSPLDVPPMIGHDPRNEETEMTRKPSTDEPFSALAFKVATHPFFGQLVFIRVYSGQIASGTQVINSTKGKKERIGKLFQMHANKENPVEEALAGHIYAAIGLKDTTTGDTLADITNPIVLESMSFPEPVISVAIEPKTKGDQEKLSTAIQKLSAEDPTFRVNLDEDTGQTIIAGMGELHLDILVDRMRREFRVEANVGKPQVAYRETIRRKVEKHDYTHKKQTGGSGQFAKIQIAIEPFTSEEGVLYEFENKVTGGRVPREYIPSVDQGIQSALTDGVLAGYPVVGIKATLLDGAYHDVDSSEMAFKIAGRMAFKEAARKADPVLLEPLMEVEVRTPEEYMGDVIGDLNSRRGQMQSMEDASGVKVIRSLVPLSGMFGYIGDLRSKTQGRAVYSMQFDSYAEVPKAVSDEIIQKARGE.

One can recognise a tr-type G domain in the interval 10 to 290 (NKVRNIGIMA…AVVDFLPSPL (281 aa)). GTP contacts are provided by residues 19–26 (AHIDAGKT), 83–87 (DTPGH), and 137–140 (NKMD). The segment at 293 to 313 (PPMIGHDPRNEETEMTRKPST) is disordered. The span at 298–313 (HDPRNEETEMTRKPST) shows a compositional bias: basic and acidic residues.

This sequence belongs to the TRAFAC class translation factor GTPase superfamily. Classic translation factor GTPase family. EF-G/EF-2 subfamily.

Its subcellular location is the cytoplasm. Functionally, catalyzes the GTP-dependent ribosomal translocation step during translation elongation. During this step, the ribosome changes from the pre-translocational (PRE) to the post-translocational (POST) state as the newly formed A-site-bound peptidyl-tRNA and P-site-bound deacylated tRNA move to the P and E sites, respectively. Catalyzes the coordinated movement of the two tRNA molecules, the mRNA and conformational changes in the ribosome. In Renibacterium salmoninarum (strain ATCC 33209 / DSM 20767 / JCM 11484 / NBRC 15589 / NCIMB 2235), this protein is Elongation factor G.